Consider the following 290-residue polypeptide: Agmatinase (290 aa).

Residues His112, Asp135, His137, Asp139, Asp216, and Asp218 each coordinate Mn(2+).

This sequence belongs to the arginase family. Agmatinase subfamily. Mn(2+) is required as a cofactor.

It carries out the reaction agmatine + H2O = urea + putrescine. It functions in the pathway amine and polyamine biosynthesis; putrescine biosynthesis via agmatine pathway; putrescine from agmatine: step 1/1. Catalyzes the formation of putrescine from agmatine. The polypeptide is Agmatinase (speB) (Bacillus anthracis).